The chain runs to 404 residues: MQYSEIMIRYGELSTKGKNRMRFINKLRNNISDVLSIYPQVKVTADRDRAHAYLNGADYTAVAESLKQVFGIQNFSPVYKVEKSVEVLKSAVQEIMRDIYKEGMTFKISSKRSDHNFELDSRELNQTLGGAVFEAIPNVQVQMKSPDINLQVEIREEAAYLSYETIRGAGGLPVGTSGKGMLMLSGGIDSPVAGYLALKRGVDIEAVHFASPPYTSPGALKKAQDLTRKLTKFGGNIQFIEVPFTEIQEEIKAKAPEAYLMTLTRRFMMRITDRIREVRNGLVIINGESLGQVASQTLESMKAINAVTNTPIIRPVVTMDKLEIIDIAQEIDTFDISIQPFEDCCTIFAPDRPKTNPKIKNAEQYEARMDVEGLVERAVAGIMITEITPQAEKDEVDDLIDNLL.

Residues 60–165 (TAVAESLKQV…EEAAYLSYET (106 aa)) form the THUMP domain. ATP contacts are provided by residues 183–184 (ML), 208–209 (HF), Arg-265, Gly-287, and Gln-296.

The protein belongs to the ThiI family.

It is found in the cytoplasm. It carries out the reaction [ThiI sulfur-carrier protein]-S-sulfanyl-L-cysteine + a uridine in tRNA + 2 reduced [2Fe-2S]-[ferredoxin] + ATP + H(+) = [ThiI sulfur-carrier protein]-L-cysteine + a 4-thiouridine in tRNA + 2 oxidized [2Fe-2S]-[ferredoxin] + AMP + diphosphate. The enzyme catalyses [ThiS sulfur-carrier protein]-C-terminal Gly-Gly-AMP + S-sulfanyl-L-cysteinyl-[cysteine desulfurase] + AH2 = [ThiS sulfur-carrier protein]-C-terminal-Gly-aminoethanethioate + L-cysteinyl-[cysteine desulfurase] + A + AMP + 2 H(+). It participates in cofactor biosynthesis; thiamine diphosphate biosynthesis. Catalyzes the ATP-dependent transfer of a sulfur to tRNA to produce 4-thiouridine in position 8 of tRNAs, which functions as a near-UV photosensor. Also catalyzes the transfer of sulfur to the sulfur carrier protein ThiS, forming ThiS-thiocarboxylate. This is a step in the synthesis of thiazole, in the thiamine biosynthesis pathway. The sulfur is donated as persulfide by IscS. This chain is Probable tRNA sulfurtransferase, found in Streptococcus pneumoniae (strain 70585).